The chain runs to 322 residues: Eukaryotic translation initiation factor 3 subunit I (322 aa).

5 WD repeats span residues 4-43 (GHER…RLGT), 46-85 (GHQG…VIAS), 141-180 (MVES…KVVD), 184-223 (DHTA…CLKT), and 281-322 (GHFG…NIFE).

This sequence belongs to the eIF-3 subunit I family. Component of the eukaryotic translation initiation factor 3 (eIF-3) complex. The eIF-3 complex interacts with pix.

The protein localises to the cytoplasm. Component of the eukaryotic translation initiation factor 3 (eIF-3) complex, which is involved in protein synthesis of a specialized repertoire of mRNAs and, together with other initiation factors, stimulates binding of mRNA and methionyl-tRNAi to the 40S ribosome. The eIF-3 complex specifically targets and initiates translation of a subset of mRNAs involved in cell proliferation. The sequence is that of Eukaryotic translation initiation factor 3 subunit I from Drosophila mojavensis (Fruit fly).